Consider the following 371-residue polypeptide: MSIHSASPITRRKSRKIWVGNVPVGGDAPIAVQSMTNTETCDVAATVAQIRRLEDAGADIVRVSVPDMDAAEAFGKIKQQVNVPLVADIHFDYRIALRVAELGVDCLRINPGNIGREDRVKAVVDAARERNIPIRIGVNAGSLEKDLQKKYGEPTPEALLESAMRHVDHLDKLDFQNFKVSVKASDVFMAVAAYRLLARQIEQPLHLGITEAGGLRSGTVKSAVGLGMLLAEGIGDTIRISLAADPVEEIKVGFDILKSLHLRSRGINFIACPSCSRQNFDVVKTMNELEGRLEDLLVPMDVAVIGCVVNGPGEAKEAHVGLTGGTPNLVYIDGKPSQKLTNDNLVDELERLIRQKAAEKAEADASLIARG.

Residues Cys272, Cys275, Cys307, and Glu314 each coordinate [4Fe-4S] cluster.

The protein belongs to the IspG family. [4Fe-4S] cluster is required as a cofactor.

The catalysed reaction is (2E)-4-hydroxy-3-methylbut-2-enyl diphosphate + oxidized [flavodoxin] + H2O + 2 H(+) = 2-C-methyl-D-erythritol 2,4-cyclic diphosphate + reduced [flavodoxin]. It participates in isoprenoid biosynthesis; isopentenyl diphosphate biosynthesis via DXP pathway; isopentenyl diphosphate from 1-deoxy-D-xylulose 5-phosphate: step 5/6. In terms of biological role, converts 2C-methyl-D-erythritol 2,4-cyclodiphosphate (ME-2,4cPP) into 1-hydroxy-2-methyl-2-(E)-butenyl 4-diphosphate. This chain is 4-hydroxy-3-methylbut-2-en-1-yl diphosphate synthase (flavodoxin), found in Pseudomonas paraeruginosa (strain DSM 24068 / PA7) (Pseudomonas aeruginosa (strain PA7)).